We begin with the raw amino-acid sequence, 482 residues long: Complement C1r subcomponent-like protein (482 aa).

An N-terminal signal peptide occupies residues 1-43 (MSGFRGLVPELENSLWSSPTTSCMSKMCWWLLWGILHTCPTQA). In terms of domain architecture, CUB spans 44–166 (SVLLAQQSPQ…KGFLALYQAV (123 aa)). 2 disulfide bridges follow: Cys-97–Cys-115 and Cys-190–Cys-223. Residues 166–225 (VAVNQPNGDTEAVTTPGAPKIQNHCQDPYYKADQTGTLSCPSSWKWKDRQDGGEVPECVP) form the Sushi domain. In terms of domain architecture, Peptidase S1 spans 240 to 479 (TFGSSRAKLG…YMDWIKRVIE (240 aa)). Active-site charge relay system residues include His-278 and Asp-334. N-linked (GlcNAc...) asparagine glycosylation is present at Asn-358. 2 cysteine pairs are disulfide-bonded: Cys-397-Cys-416 and Cys-427-Cys-457. Ser-431 acts as the Charge relay system in catalysis.

This sequence belongs to the peptidase S1 family. As to expression, expressed in liver (at protein level).

Its subcellular location is the secreted. In terms of biological role, mediates the proteolytic cleavage of HP/haptoglobin in the endoplasmic reticulum. The chain is Complement C1r subcomponent-like protein (C1rl) from Mus musculus (Mouse).